We begin with the raw amino-acid sequence, 398 residues long: Rhizopuspepsin-4 (398 aa).

The first 21 residues, 1–21 (MKFTLISSCVALACMALAVEA), serve as a signal peptide directing secretion. The propeptide at 22–74 (APSGKKINVPLSKNANYKPNAKRAIEKANAKYARFRSSSSSSSSSSCGSAGTE) is activation peptide. Positions 58-78 (SSSSSSSSSSCGSAGTESSGS) are enriched in low complexity. The disordered stretch occupies residues 58–83 (SSSSSSSSSSCGSAGTESSGSVPVTD). The Peptidase A1 domain maps to 90 to 394 (YYGEVTVGTP…NPQVPQVQIA (305 aa)). Residue Asp108 is part of the active site. Cys121 and Cys124 are disulfide-bonded. Asp291 is a catalytic residue. The cysteines at positions 325 and 358 are disulfide-linked.

It belongs to the peptidase A1 family.

It carries out the reaction Hydrolysis of proteins with broad specificity similar to that of pepsin A, preferring hydrophobic residues at P1 and P1'. Clots milk and activates trypsinogen. Does not cleave 4-Gln-|-His-5, but does cleave 10-His-|-Leu-11 and 12-Val-|-Glu-13 in B chain of insulin.. This is Rhizopuspepsin-4 from Rhizopus niveus.